The primary structure comprises 689 residues: Glycine--tRNA ligase beta subunit (689 aa).

The protein belongs to the class-II aminoacyl-tRNA synthetase family. In terms of assembly, tetramer of two alpha and two beta subunits.

Its subcellular location is the cytoplasm. It carries out the reaction tRNA(Gly) + glycine + ATP = glycyl-tRNA(Gly) + AMP + diphosphate. In Acinetobacter baumannii (strain ATCC 17978 / DSM 105126 / CIP 53.77 / LMG 1025 / NCDC KC755 / 5377), this protein is Glycine--tRNA ligase beta subunit.